Here is an 82-residue protein sequence, read N- to C-terminus: Small ribosomal subunit protein bS16 (82 aa).

This sequence belongs to the bacterial ribosomal protein bS16 family.

The polypeptide is Small ribosomal subunit protein bS16 (Acidobacterium capsulatum (strain ATCC 51196 / DSM 11244 / BCRC 80197 / JCM 7670 / NBRC 15755 / NCIMB 13165 / 161)).